The sequence spans 98 residues: Integration host factor subunit alpha (98 aa).

Residues asparagine 51–isoleucine 71 form a disordered region. Positions aspartate 53–glutamate 69 are enriched in basic and acidic residues.

The protein belongs to the bacterial histone-like protein family. As to quaternary structure, heterodimer of an alpha and a beta chain.

Functionally, this protein is one of the two subunits of integration host factor, a specific DNA-binding protein that functions in genetic recombination as well as in transcriptional and translational control. The polypeptide is Integration host factor subunit alpha (Vibrio cholerae serotype O1 (strain ATCC 39541 / Classical Ogawa 395 / O395)).